The chain runs to 650 residues: Protein kinase domain-containing protein ppk38 (650 aa).

The 283-residue stretch at 33–315 (VTVKRYLAEG…MRNVPIHIYD (283 aa)) folds into the Protein kinase domain. Disordered stretches follow at residues 344 to 442 (IHQS…PTTP), 517 to 571 (KVAA…PTNM), and 591 to 616 (RRVS…EKPM). 2 stretches are compositionally biased toward polar residues: residues 369–415 (NVNS…NFRV) and 533–554 (SVEN…SSNA).

The protein is Protein kinase domain-containing protein ppk38 (ppk38) of Schizosaccharomyces pombe (strain 972 / ATCC 24843) (Fission yeast).